The sequence spans 50 residues: Large ribosomal subunit protein eL40 (50 aa).

Belongs to the eukaryotic ribosomal protein eL40 family.

This Aeropyrum pernix (strain ATCC 700893 / DSM 11879 / JCM 9820 / NBRC 100138 / K1) protein is Large ribosomal subunit protein eL40.